Consider the following 455-residue polypeptide: Argininosuccinate lyase (455 aa).

This sequence belongs to the lyase 1 family. Argininosuccinate lyase subfamily.

It is found in the cytoplasm. The catalysed reaction is 2-(N(omega)-L-arginino)succinate = fumarate + L-arginine. It participates in amino-acid biosynthesis; L-arginine biosynthesis; L-arginine from L-ornithine and carbamoyl phosphate: step 3/3. In Roseiflexus sp. (strain RS-1), this protein is Argininosuccinate lyase.